Reading from the N-terminus, the 90-residue chain is UPF0335 protein Smed_2680 (90 aa).

It belongs to the UPF0335 family.

This chain is UPF0335 protein Smed_2680, found in Sinorhizobium medicae (strain WSM419) (Ensifer medicae).